Consider the following 612-residue polypeptide: Elongation factor 4 (612 aa).

The region spanning 11–193 (KHIRNFSIIA…KLVTDVPAPT (183 aa)) is the tr-type G domain. GTP is bound by residues 23–28 (DHGKST) and 140–143 (NKID).

Belongs to the TRAFAC class translation factor GTPase superfamily. Classic translation factor GTPase family. LepA subfamily.

It is found in the cell membrane. The enzyme catalyses GTP + H2O = GDP + phosphate + H(+). Functionally, required for accurate and efficient protein synthesis under certain stress conditions. May act as a fidelity factor of the translation reaction, by catalyzing a one-codon backward translocation of tRNAs on improperly translocated ribosomes. Back-translocation proceeds from a post-translocation (POST) complex to a pre-translocation (PRE) complex, thus giving elongation factor G a second chance to translocate the tRNAs correctly. Binds to ribosomes in a GTP-dependent manner. This is Elongation factor 4 from Latilactobacillus sakei subsp. sakei (strain 23K) (Lactobacillus sakei subsp. sakei).